The primary structure comprises 475 residues: Glycogen synthase (475 aa).

Lysine 15 is an ADP-alpha-D-glucose binding site.

The protein belongs to the glycosyltransferase 1 family. Bacterial/plant glycogen synthase subfamily.

It catalyses the reaction [(1-&gt;4)-alpha-D-glucosyl](n) + ADP-alpha-D-glucose = [(1-&gt;4)-alpha-D-glucosyl](n+1) + ADP + H(+). It participates in glycan biosynthesis; glycogen biosynthesis. In terms of biological role, synthesizes alpha-1,4-glucan chains using ADP-glucose. This Chlamydia abortus (strain DSM 27085 / S26/3) (Chlamydophila abortus) protein is Glycogen synthase.